The sequence spans 270 residues: Regulatory protein RecX (270 aa).

This sequence belongs to the RecX family.

The protein resides in the cytoplasm. Its function is as follows. Modulates RecA activity. In Bacillus mycoides (strain KBAB4) (Bacillus weihenstephanensis), this protein is Regulatory protein RecX.